The sequence spans 166 residues: MFSLPLNCSPDHIRRGSCWGRPQDLKIAAPAWNSKCHPGAGAAMARQHARTLWYDRPRYVFMEFCVEDSTDVHVLIEDHRIVFSCKNADGVELYNEIEFYAKVNSKPVWLSVDFDNWRDWEGDEEMELAHVEHYAELLKKVSTKRPPPAMDDLDDDSDSADDATSN.

Positions Arg-46–Asp-154 constitute a CS domain. The tract at residues Ser-142 to Asn-166 is disordered. A compositionally biased stretch (acidic residues) spans Asp-151–Asn-166.

It belongs to the p23/wos2 family.

The polypeptide is Putative protein PTGES3L (Homo sapiens (Human)).